A 258-amino-acid chain; its full sequence is Small ribosomal subunit protein uS2 (258 aa).

Belongs to the universal ribosomal protein uS2 family.

This is Small ribosomal subunit protein uS2 from Streptococcus suis (strain 98HAH33).